Here is a 671-residue protein sequence, read N- to C-terminus: DNA ligase (671 aa).

NAD(+) contacts are provided by residues 34-38, 83-84, and E113; these read DSEYD and SL. The N6-AMP-lysine intermediate role is filled by K115. NAD(+) contacts are provided by R136, E170, K286, and K310. The Zn(2+) site is built by C404, C407, C422, and C427. Residues 590-671 enclose the BRCT domain; sequence EEAGVFAGKT…FTQAVEQSEQ (82 aa).

Belongs to the NAD-dependent DNA ligase family. LigA subfamily. Requires Mg(2+) as cofactor. The cofactor is Mn(2+).

The enzyme catalyses NAD(+) + (deoxyribonucleotide)n-3'-hydroxyl + 5'-phospho-(deoxyribonucleotide)m = (deoxyribonucleotide)n+m + AMP + beta-nicotinamide D-nucleotide.. Functionally, DNA ligase that catalyzes the formation of phosphodiester linkages between 5'-phosphoryl and 3'-hydroxyl groups in double-stranded DNA using NAD as a coenzyme and as the energy source for the reaction. It is essential for DNA replication and repair of damaged DNA. The polypeptide is DNA ligase (Shouchella clausii (strain KSM-K16) (Alkalihalobacillus clausii)).